A 677-amino-acid polypeptide reads, in one-letter code: AP-2 complex subunit beta (677 aa).

The segment at 597–677 is disordered; that stretch reads RLRTRDSNPS…PMTPETHLMD (81 aa). The span at 616–627 shows a compositional bias: basic residues; it reads KKYNHFHQKSQT. Residues 636–654 are compositionally biased toward polar residues; that stretch reads RNSWNPSPFSDESNSNTFS.

Belongs to the adaptor complexes large subunit family. As to quaternary structure, adaptor protein complex 2 (AP-2) is a heterotetramer composed of two large adaptins (alpha-type subunit apl3 and beta-type subunit apl1), a medium chain (mu-type subunit apm4) and a small adaptin (sigma-type subunit aps2).

It is found in the cell membrane. The protein localises to the membrane. It localises to the coated pit. In terms of biological role, adaptins are components of the adaptor complexes which link clathrin to receptors in coated vesicles. Clathrin-associated protein complexes are believed to interact with the cytoplasmic tails of membrane proteins, leading to their selection and concentration. Beta adaptin is a subunit of the plasma membrane adaptor. This is AP-2 complex subunit beta (apl1) from Schizosaccharomyces pombe (strain 972 / ATCC 24843) (Fission yeast).